Consider the following 169-residue polypeptide: Phosphopantetheine adenylyltransferase (169 aa).

Substrate is bound at residue Thr-14. ATP is bound by residues 14–15 and His-22; that span reads TF. Substrate contacts are provided by Lys-46, Leu-78, and Arg-92. Residues 93–95, Glu-103, and 128–134 contribute to the ATP site; these read GLR and HSFISSS.

Belongs to the bacterial CoaD family. Homohexamer. The cofactor is Mg(2+).

The protein resides in the cytoplasm. It carries out the reaction (R)-4'-phosphopantetheine + ATP + H(+) = 3'-dephospho-CoA + diphosphate. The protein operates within cofactor biosynthesis; coenzyme A biosynthesis; CoA from (R)-pantothenate: step 4/5. Its function is as follows. Reversibly transfers an adenylyl group from ATP to 4'-phosphopantetheine, yielding dephospho-CoA (dPCoA) and pyrophosphate. This chain is Phosphopantetheine adenylyltransferase, found in Stenotrophomonas maltophilia (strain R551-3).